We begin with the raw amino-acid sequence, 278 residues long: Ribosomal RNA small subunit methyltransferase A (278 aa).

Residues Asn27, Leu29, Gly54, Glu75, Asp95, and Asn118 each coordinate S-adenosyl-L-methionine.

The protein belongs to the class I-like SAM-binding methyltransferase superfamily. rRNA adenine N(6)-methyltransferase family. RsmA subfamily.

Its subcellular location is the cytoplasm. It carries out the reaction adenosine(1518)/adenosine(1519) in 16S rRNA + 4 S-adenosyl-L-methionine = N(6)-dimethyladenosine(1518)/N(6)-dimethyladenosine(1519) in 16S rRNA + 4 S-adenosyl-L-homocysteine + 4 H(+). In terms of biological role, specifically dimethylates two adjacent adenosines (A1518 and A1519) in the loop of a conserved hairpin near the 3'-end of 16S rRNA in the 30S particle. May play a critical role in biogenesis of 30S subunits. The polypeptide is Ribosomal RNA small subunit methyltransferase A (Chlamydia abortus (strain DSM 27085 / S26/3) (Chlamydophila abortus)).